Here is a 268-residue protein sequence, read N- to C-terminus: MCSLSAIMLLPTKLKPAYSDKRSNSSSSSSLFFNNRRSKKKNQSIVPVARLFGPAIFESSKLKVLFLGVDEKKHPSTLPRTYTLTHSDITAKLTLAISQSINNSQLQGWANRLYRDEVVAEWKKVKGKMSLHVHCHISGGHFLLDLFAKFRYFIFCKELPVVLKAFVHGDGNLLNNYPELQEALVWVYFHSNVNEFNKVECWGPLWEAVSPDGHKTETLPEARCADECSCCFPTVSSIPWSHSLSNEGVNGYSGTQTEGIATPNPEKL.

A chloroplast-targeting transit peptide spans 1 to 48; it reads MCSLSAIMLLPTKLKPAYSDKRSNSSSSSSLFFNNRRSKKKNQSIVPV.

It belongs to the staygreen family. Interacts with HCAR, the chlorophyll catabolic enzymes (CCEs) NYC1, PAO and RCCR, and the LHCII complex. Part of a SGR1-CCE-LHCII complex, which acts in chlorophyll breakdown. As to expression, expressed in roots, leaves, seeds, flowers, buds, petals, sepals and siliques.

The protein resides in the plastid. It is found in the chloroplast thylakoid membrane. It catalyses the reaction chlorophyll a + 2 H(+) = pheophytin a + Mg(2+). Functionally, magnesium chelatase involved in chlorophyll a degradation in the chlorophyll-protein complexes of photosystem I (PSI) and photosystem II (PSII). Contributes to the degradation of PSI and PSII in the thylakoid membranes. Required to trigger chlorophyll degradation during natural and dark-induced leaf senescence. Mediates chlorophyll degradation during embryo degreening. Recombinant SGR1 possesses high dechelating activity against chlorophyll a, very low activity against chlorophyllide a, and no activity against chlorophyll b. Magnesium dechelation of chlorophyll a by SGR1 activates chlorophyll b degradation by inducing the expression of NYC1, an enzyme involved in chlorophyll b degradation. This is Magnesium dechelatase SGR1, chloroplastic from Arabidopsis thaliana (Mouse-ear cress).